Consider the following 1242-residue polypeptide: ATP-dependent helicase/nuclease subunit A (1242 aa).

The region spanning 12-487 is the UvrD-like helicase ATP-binding domain; it reads SRWTDEQWKA…IDLASNFRSR (476 aa). An ATP-binding site is contributed by 33-40; it reads AAAGSGKT. Residues 514 to 808 form the UvrD-like helicase C-terminal domain; sequence AAQLKYGADY…RIMTIHSSKG (295 aa).

Belongs to the helicase family. AddA subfamily. As to quaternary structure, heterodimer of AddA and AddB/RexB. Requires Mg(2+) as cofactor.

It carries out the reaction Couples ATP hydrolysis with the unwinding of duplex DNA by translocating in the 3'-5' direction.. The catalysed reaction is ATP + H2O = ADP + phosphate + H(+). Its function is as follows. The heterodimer acts as both an ATP-dependent DNA helicase and an ATP-dependent, dual-direction single-stranded exonuclease. Recognizes the chi site generating a DNA molecule suitable for the initiation of homologous recombination. The AddA nuclease domain is required for chi fragment generation; this subunit has the helicase and 3' -&gt; 5' nuclease activities. The chain is ATP-dependent helicase/nuclease subunit A from Geobacillus kaustophilus (strain HTA426).